The following is an 857-amino-acid chain: DNA mismatch repair protein MutS (857 aa).

Residue 603–610 (GPNMAGKS) participates in ATP binding.

The protein belongs to the DNA mismatch repair MutS family.

Its function is as follows. This protein is involved in the repair of mismatches in DNA. It is possible that it carries out the mismatch recognition step. This protein has a weak ATPase activity. This chain is DNA mismatch repair protein MutS, found in Methanothrix thermoacetophila (strain DSM 6194 / JCM 14653 / NBRC 101360 / PT) (Methanosaeta thermophila).